A 214-amino-acid polypeptide reads, in one-letter code: Glycoprotein Q2 (214 aa).

The signal sequence occupies residues 1–19; the sequence is MHFLVVYILIHFHAYRGMA. N-linked (GlcNAc...) asparagine; by host glycans are attached at residues N41, N74, N110, and N210.

As to quaternary structure, interacts with isoform gQ1. The heterodimer gQ1-gQ2 associates with the glycoprotein complex gH-gL to form a tetrameric complex. The gH/gL/gQ1/gQ2 complex binds to human receptor CD46. Post-translationally, glycosylated by host.

The protein localises to the virion membrane. It localises to the host endoplasmic reticulum-Golgi intermediate compartment. Its function is as follows. Plays a role in virus entry by participating in host receptor binding at the cell surface. This is Glycoprotein Q2 from Human herpesvirus 6A (strain Uganda-1102) (HHV-6 variant A).